The chain runs to 807 residues: Putative histidine biosynthesis bifunctional protein HisCD (807 aa).

Residues 1 to 440 form a histidinol dehydrogenase region; it reads MTDHFDTLIR…ALNIAGQGVN (440 aa). Zn(2+)-binding residues include Q261 and H264. Catalysis depends on residues E328 and H329. The Zn(2+) site is built by D362 and H421. The interval 441–807 is histidinol-phosphate aminotransferase; that stretch reads MNNIFDANLL…VNEQPKEIAN (367 aa). An N6-(pyridoxal phosphate)lysine modification is found at K655.

It in the N-terminal section; belongs to the histidinol dehydrogenase family. The protein in the C-terminal section; belongs to the class-II pyridoxal-phosphate-dependent aminotransferase family. Histidinol-phosphate aminotransferase subfamily. Homodimer. It depends on Zn(2+) as a cofactor. The cofactor is pyridoxal 5'-phosphate.

It carries out the reaction L-histidinol phosphate + 2-oxoglutarate = 3-(imidazol-4-yl)-2-oxopropyl phosphate + L-glutamate. The catalysed reaction is L-histidinol + 2 NAD(+) + H2O = L-histidine + 2 NADH + 3 H(+). It participates in amino-acid biosynthesis; L-histidine biosynthesis; L-histidine from 5-phospho-alpha-D-ribose 1-diphosphate: step 7/9. Its pathway is amino-acid biosynthesis; L-histidine biosynthesis; L-histidine from 5-phospho-alpha-D-ribose 1-diphosphate: step 9/9. Functionally, catalyzes the sequential NAD-dependent oxidations of L-histidinol to L-histidinaldehyde and then to L-histidine. This Photorhabdus laumondii subsp. laumondii (strain DSM 15139 / CIP 105565 / TT01) (Photorhabdus luminescens subsp. laumondii) protein is Putative histidine biosynthesis bifunctional protein HisCD (hisCD).